The following is a 486-amino-acid chain: UDP-N-acetylmuramate--L-alanine ligase (486 aa).

123-129 (GTHGKTT) serves as a coordination point for ATP.

It belongs to the MurCDEF family.

It is found in the cytoplasm. The enzyme catalyses UDP-N-acetyl-alpha-D-muramate + L-alanine + ATP = UDP-N-acetyl-alpha-D-muramoyl-L-alanine + ADP + phosphate + H(+). The protein operates within cell wall biogenesis; peptidoglycan biosynthesis. Functionally, cell wall formation. The protein is UDP-N-acetylmuramate--L-alanine ligase of Pseudomonas fluorescens (strain Pf0-1).